The chain runs to 471 residues: Glutamate--tRNA ligase (471 aa).

The 'HIGH' region signature appears at 9–19; sequence PSPTGYLHVGG. Positions 98, 100, 125, and 127 each coordinate Zn(2+). The 'KMSKS' region signature appears at 237–241; the sequence is KLSKR. Position 240 (lysine 240) interacts with ATP.

It belongs to the class-I aminoacyl-tRNA synthetase family. Glutamate--tRNA ligase type 1 subfamily. Monomer. Requires Zn(2+) as cofactor.

It localises to the cytoplasm. It catalyses the reaction tRNA(Glu) + L-glutamate + ATP = L-glutamyl-tRNA(Glu) + AMP + diphosphate. Its function is as follows. Catalyzes the attachment of glutamate to tRNA(Glu) in a two-step reaction: glutamate is first activated by ATP to form Glu-AMP and then transferred to the acceptor end of tRNA(Glu). The protein is Glutamate--tRNA ligase of Escherichia coli O1:K1 / APEC.